A 382-amino-acid chain; its full sequence is Putative acetyl-CoA C-acetyltransferase VraB (382 aa).

Residue Cys-86 is the Acyl-thioester intermediate of the active site. His-338 (proton acceptor) is an active-site residue.

It belongs to the thiolase-like superfamily. Thiolase family.

The sequence is that of Putative acetyl-CoA C-acetyltransferase VraB (vraB) from Staphylococcus epidermidis (strain ATCC 12228 / FDA PCI 1200).